A 321-amino-acid chain; its full sequence is S-methyl-5'-thioadenosine phosphorylase (321 aa).

Phosphate is bound by residues T30, 73-74 (RH), and 106-107 (SA). Substrate is bound at residue M215. S216 contacts phosphate. 239–241 (DYD) contributes to the substrate binding site.

This sequence belongs to the PNP/MTAP phosphorylase family. MTAP subfamily. As to quaternary structure, homotrimer.

Its subcellular location is the cytoplasm. It localises to the nucleus. The catalysed reaction is S-methyl-5'-thioadenosine + phosphate = 5-(methylsulfanyl)-alpha-D-ribose 1-phosphate + adenine. It participates in amino-acid biosynthesis; L-methionine biosynthesis via salvage pathway; S-methyl-5-thio-alpha-D-ribose 1-phosphate from S-methyl-5'-thioadenosine (phosphorylase route): step 1/1. Catalyzes the reversible phosphorylation of S-methyl-5'-thioadenosine (MTA) to adenine and 5-methylthioribose-1-phosphate. Involved in the breakdown of MTA, a major by-product of polyamine biosynthesis. Responsible for the first step in the methionine salvage pathway after MTA has been generated from S-adenosylmethionine. Has broad substrate specificity with 6-aminopurine nucleosides as preferred substrates. The sequence is that of S-methyl-5'-thioadenosine phosphorylase from Yarrowia lipolytica (strain CLIB 122 / E 150) (Yeast).